Here is a 449-residue protein sequence, read N- to C-terminus: Putative F-box/LRR-repeat protein 23 (449 aa).

LRR repeat units follow at residues 14 to 37 and 39 to 64; these read KLWRYDDEPLAIAETMPELRHLKL and GNGLTNLRLEAILDNCVHLVHLDLRR. The F-box domain maps to 178–225; the sequence is LRNWAELPSKLTSSILLRLGAIEILQNAQKVCKPWHRVCKDPSMWRKI. LRR repeat units lie at residues 261–286, 287–311, 312–337, 344–367, 369–394, and 401–427; these read WYYGTNDLIMYIADRSSNLKSLGLVR, CFPITDEGVAKAVSKVPLLEYLEVS, YCLFSGESLRDIGRSCPNLKTLKLNR, SNSGFDDNAKAIAESMPELRHLQL, GNGLTNKGLNAILDGCPHLEHLDLRQ, and VGDLKKRCFERIKDLRCPNDSDDDSDD.

This chain is Putative F-box/LRR-repeat protein 23 (FBL23), found in Arabidopsis thaliana (Mouse-ear cress).